A 427-amino-acid chain; its full sequence is Glutamate-1-semialdehyde 2,1-aminomutase (427 aa).

At K267 the chain carries N6-(pyridoxal phosphate)lysine.

This sequence belongs to the class-III pyridoxal-phosphate-dependent aminotransferase family. HemL subfamily. As to quaternary structure, homodimer. Pyridoxal 5'-phosphate serves as cofactor.

It localises to the cytoplasm. It carries out the reaction (S)-4-amino-5-oxopentanoate = 5-aminolevulinate. Its pathway is porphyrin-containing compound metabolism; protoporphyrin-IX biosynthesis; 5-aminolevulinate from L-glutamyl-tRNA(Glu): step 2/2. The sequence is that of Glutamate-1-semialdehyde 2,1-aminomutase from Acetivibrio thermocellus (strain ATCC 27405 / DSM 1237 / JCM 9322 / NBRC 103400 / NCIMB 10682 / NRRL B-4536 / VPI 7372) (Clostridium thermocellum).